The following is a 181-amino-acid chain: ATP-dependent protease subunit HslV (181 aa).

Residue Thr-7 is part of the active site. Na(+) contacts are provided by Ala-166, Cys-169, and Thr-172.

This sequence belongs to the peptidase T1B family. HslV subfamily. In terms of assembly, a double ring-shaped homohexamer of HslV is capped on each side by a ring-shaped HslU homohexamer. The assembly of the HslU/HslV complex is dependent on binding of ATP.

The protein localises to the cytoplasm. It carries out the reaction ATP-dependent cleavage of peptide bonds with broad specificity.. Allosterically activated by HslU binding. Its function is as follows. Protease subunit of a proteasome-like degradation complex believed to be a general protein degrading machinery. This is ATP-dependent protease subunit HslV from Anaeromyxobacter sp. (strain Fw109-5).